A 95-amino-acid chain; its full sequence is Costars family protein WS02710_H03 (95 aa).

Belongs to the costars family.

The protein is Costars family protein WS02710_H03 of Picea sitchensis (Sitka spruce).